The primary structure comprises 441 residues: Xylose isomerase 1 (441 aa).

Active-site residues include histidine 105 and aspartate 108. Positions 236, 272, 275, 300, 311, 313, and 343 each coordinate Mg(2+).

It belongs to the xylose isomerase family. Homotetramer. Mg(2+) is required as a cofactor.

The protein localises to the cytoplasm. The catalysed reaction is alpha-D-xylose = alpha-D-xylulofuranose. The protein is Xylose isomerase 1 (xylA1) of Xanthomonas axonopodis pv. citri (strain 306).